Consider the following 221-residue polypeptide: GTP-binding nuclear protein Ran-1 (221 aa).

In terms of domain architecture, Small GTPase Ran-type spans 10–174 (DYPSFKLVIV…LYLARKLAGD (165 aa)). 21–28 (DGGTGKTT) serves as a coordination point for GTP. The interval 40–48 (KKYEPTIGV) is switch-I. Residues glycine 71, 125–128 (NKVD), and 153–155 (SAK) contribute to the GTP site. The switch-II stretch occupies residues 71–87 (GQEKFGGLRDGYYIHGQ).

Belongs to the small GTPase superfamily. Ran family. As to quaternary structure, found in a nuclear export complex with RanGTP, exportin and pre-miRNA.

The protein localises to the nucleus. Its function is as follows. GTP-binding protein involved in nucleocytoplasmic transport. Required for the import of protein into the nucleus and also for RNA export. Involved in chromatin condensation and control of cell cycle. The chain is GTP-binding nuclear protein Ran-1 (RAN1) from Oryza sativa subsp. indica (Rice).